Consider the following 345-residue polypeptide: Transcription factor 19 (345 aa).

Residues 31-88 enclose the FHA domain; it reads YRLGHRADLCDVALRPQQEPGLISGIHAELHAEPRGDDWRVSLEDHSLQGTLVNNVRL. 2 disordered regions span residues 138 to 167 and 190 to 277; these read RSRG…STLS and LTFS…KYPV. A PHD-type zinc finger spans residues 293–342; it reads AAPCCCLPQEETVAWVQCDGCDVWFHVACVGCSIQAAREADFRCPGCRAG. Residues Cys296, Cys298, Cys310, Cys313, His318, Cys321, Cys336, and Cys339 each coordinate Zn(2+).

It localises to the nucleus. Potential transcription factor that may play a role in the regulation of genes involved in cell cycle G1/S transition. May bind to regulatory elements of genes, including the promoter of the transcription factor FOXO1. The sequence is that of Transcription factor 19 (TCF19) from Macaca mulatta (Rhesus macaque).